The chain runs to 293 residues: Ribosomal protein L11 methyltransferase (293 aa).

Residues T145, G166, D188, and N230 each contribute to the S-adenosyl-L-methionine site.

It belongs to the methyltransferase superfamily. PrmA family.

It is found in the cytoplasm. The catalysed reaction is L-lysyl-[protein] + 3 S-adenosyl-L-methionine = N(6),N(6),N(6)-trimethyl-L-lysyl-[protein] + 3 S-adenosyl-L-homocysteine + 3 H(+). Methylates ribosomal protein L11. The chain is Ribosomal protein L11 methyltransferase from Actinobacillus pleuropneumoniae serotype 7 (strain AP76).